A 252-amino-acid polypeptide reads, in one-letter code: Adenosylcobinamide-GDP ribazoletransferase (252 aa).

A run of 7 helical transmembrane segments spans residues 34 to 54 (GASFMPLVGVIVGGIQWIIYK), 55 to 75 (LCIIIFSLNVSIVIVILAGIV), 113 to 133 (YACLAIIIDILLKYSFFCSIV), 138 to 158 (LIIIIAPVMSRFSIVFIAFIG), 174 to 194 (IGKWQLFWAAFITVITLFFLM), 198 to 218 (FIYVIILIFAGLFMSFLFNVF), and 230 to 250 (LLGANNEIVEILTMVMLCVII).

It belongs to the CobS family. Mg(2+) serves as cofactor.

The protein resides in the cell membrane. It carries out the reaction alpha-ribazole + adenosylcob(III)inamide-GDP = adenosylcob(III)alamin + GMP + H(+). The catalysed reaction is alpha-ribazole 5'-phosphate + adenosylcob(III)inamide-GDP = adenosylcob(III)alamin 5'-phosphate + GMP + H(+). It functions in the pathway cofactor biosynthesis; adenosylcobalamin biosynthesis; adenosylcobalamin from cob(II)yrinate a,c-diamide: step 7/7. Joins adenosylcobinamide-GDP and alpha-ribazole to generate adenosylcobalamin (Ado-cobalamin). Also synthesizes adenosylcobalamin 5'-phosphate from adenosylcobinamide-GDP and alpha-ribazole 5'-phosphate. The protein is Adenosylcobinamide-GDP ribazoletransferase of Clostridium kluyveri (strain NBRC 12016).